A 353-amino-acid chain; its full sequence is Methylthioribose-1-phosphate isomerase (353 aa).

Substrate is bound by residues 51-53, Arg-94, and Gln-199; that span reads RGA. Catalysis depends on Asp-240, which acts as the Proton donor. Residue 250–251 coordinates substrate; it reads NK.

This sequence belongs to the eIF-2B alpha/beta/delta subunits family. MtnA subfamily. Homodimer.

The enzyme catalyses 5-(methylsulfanyl)-alpha-D-ribose 1-phosphate = 5-(methylsulfanyl)-D-ribulose 1-phosphate. It functions in the pathway amino-acid biosynthesis; L-methionine biosynthesis via salvage pathway; L-methionine from S-methyl-5-thio-alpha-D-ribose 1-phosphate: step 1/6. In terms of biological role, catalyzes the interconversion of methylthioribose-1-phosphate (MTR-1-P) into methylthioribulose-1-phosphate (MTRu-1-P). The sequence is that of Methylthioribose-1-phosphate isomerase from Bacillus velezensis (strain DSM 23117 / BGSC 10A6 / LMG 26770 / FZB42) (Bacillus amyloliquefaciens subsp. plantarum).